Consider the following 204-residue polypeptide: Ribosomal RNA large subunit methyltransferase E (204 aa).

S-adenosyl-L-methionine-binding residues include glycine 49, tryptophan 51, aspartate 69, asparagine 87, and aspartate 111. The active-site Proton acceptor is the lysine 151.

It belongs to the class I-like SAM-binding methyltransferase superfamily. RNA methyltransferase RlmE family.

The protein resides in the cytoplasm. It catalyses the reaction uridine(2552) in 23S rRNA + S-adenosyl-L-methionine = 2'-O-methyluridine(2552) in 23S rRNA + S-adenosyl-L-homocysteine + H(+). In terms of biological role, specifically methylates the uridine in position 2552 of 23S rRNA at the 2'-O position of the ribose in the fully assembled 50S ribosomal subunit. This is Ribosomal RNA large subunit methyltransferase E from Nitratidesulfovibrio vulgaris (strain ATCC 29579 / DSM 644 / CCUG 34227 / NCIMB 8303 / VKM B-1760 / Hildenborough) (Desulfovibrio vulgaris).